The chain runs to 125 residues: Holo-[acyl-carrier-protein] synthase (125 aa).

Residues Asp-6 and Glu-55 each contribute to the Mg(2+) site.

Belongs to the P-Pant transferase superfamily. AcpS family. Mg(2+) serves as cofactor.

The protein resides in the cytoplasm. It catalyses the reaction apo-[ACP] + CoA = holo-[ACP] + adenosine 3',5'-bisphosphate + H(+). Its function is as follows. Transfers the 4'-phosphopantetheine moiety from coenzyme A to a Ser of acyl-carrier-protein. In Chlorobium phaeovibrioides (strain DSM 265 / 1930) (Prosthecochloris vibrioformis (strain DSM 265)), this protein is Holo-[acyl-carrier-protein] synthase.